A 443-amino-acid polypeptide reads, in one-letter code: Glutamate--tRNA ligase 2 (443 aa).

The 'HIGH' region motif lies at 7–17 (PSPTGYLHVGN). The short motif at 236 to 240 (KISKR) is the 'KMSKS' region element. Lys239 is an ATP binding site.

Belongs to the class-I aminoacyl-tRNA synthetase family. Glutamate--tRNA ligase type 1 subfamily. Monomer.

The protein localises to the cytoplasm. It carries out the reaction tRNA(Glu) + L-glutamate + ATP = L-glutamyl-tRNA(Glu) + AMP + diphosphate. Functionally, catalyzes the attachment of glutamate to tRNA(Glu) in a two-step reaction: glutamate is first activated by ATP to form Glu-AMP and then transferred to the acceptor end of tRNA(Glu). This is Glutamate--tRNA ligase 2 from Ehrlichia canis (strain Jake).